We begin with the raw amino-acid sequence, 441 residues long: tRNA (adenine(37)-N6)-methyltransferase (441 aa).

In terms of domain architecture, TsaA-like spans 30 to 168 (TEPVGYLESC…YIAEYDSPQN (139 aa)). S-adenosyl-L-methionine contacts are provided by residues 47–49 (PRQ), 90–91 (HK), Arg-117, Leu-127, and 148–151 (IHGT). Residues 179–192 (QNNQHTPNTVSQSD) are compositionally biased toward polar residues. 2 disordered regions span residues 179–231 (QNNQ…EENY) and 264–284 (SSVA…SEKG).

The protein belongs to the tRNA methyltransferase O family.

It catalyses the reaction N(6)-L-threonylcarbamoyladenosine(37) in tRNA + S-adenosyl-L-methionine = N(6)-methyl,N(6)-L-threonylcarbamoyladenosine(37) in tRNA + S-adenosyl-L-homocysteine + H(+). Its function is as follows. S-adenosyl-L-methionine-dependent methyltransferase responsible for the addition of the methyl group in the formation of N6-methyl-N6-threonylcarbamoyladenosine at position 37 (m(6)t(6)A37) of the tRNA anticodon loop of tRNA(Ser)(GCU). The methyl group of m(6)t(6)A37 may improve the efficiency of the tRNA decoding ability. This chain is tRNA (adenine(37)-N6)-methyltransferase, found in Homo sapiens (Human).